The chain runs to 709 residues: MAQAHIQGSPCPLLPPGRMSWPQGALLLLWLFSPPLRAGGGGVAVTSAAGGGSPPATSCPAACSCSNQASRVICTRRELAEVPASIPVNTRYLNLQENSIQVIRTDTFKHLRHLEILQLSKNLVRKIEVGAFNGLPSLNTLELFDNRLTTVPTQAFEYLSKLRELWLRNNPIESIPSYAFNRVPSLRRLDLGELKRLEYISEAAFEGLVNLRYLNLGMCNLKDIPNLTALVRLEELELSGNRLDLIRPGSFQGLTSLRKLWLMHAQVATIERNAFDDLKSLEELNLSHNNLMSLPHDLFTPLHRLERVHLNHNPWHCNCDVLWLSWWLKETVPSNTTCCARCHAPAGLKGRYIGELDQSHFTCYAPVIVEPPTDLNVTEGMAAELKCRTGTSMTSVNWLTPNGTLMTHGSYRVRISVLHDGTLNFTNVTVQDTGQYTCMVTNSAGNTTASATLNVSAVDPVAAGGPGGGGPGGGGGAGGAGGYTYFTTVTVETLETQPGEEAQQPRGTEKEPPGPTTDGAWGGGRPDAAAPASASTTAPAPRSSRPTEKAFTVPITDVTENALKDLDDVMKTTKIIIGCFVAITFMAAVMLVAFYKLRKQHQLHKHHGPTRTVEIINVEDELPAASAVSVAAAAAVAGGAGVGGDSHLALPALERDHLNHHHYVAAAFKAHYGGNPGGGCGAKGPGLNSIHEPLLFKSGSKENVQETQI.

The first 38 residues, 1 to 38 (MAQAHIQGSPCPLLPPGRMSWPQGALLLLWLFSPPLRA), serve as a signal peptide directing secretion. One can recognise an LRRNT domain in the interval 50–88 (GGGSPPATSCPAACSCSNQASRVICTRRELAEVPASIPV). LRR repeat units lie at residues 89 to 110 (NTRY…TFKH), 113 to 134 (HLEI…AFNG), 137 to 158 (SLNT…AFEY), 161 to 182 (KLRE…AFNR), 185 to 207 (SLRR…AFEG), 210 to 231 (NLRY…TALV), 232 to 253 (RLEE…SFQG), 256 to 277 (SLRK…AFDD), and 280 to 301 (SLEE…LFTP). The LRRCT domain maps to 313–365 (NPWHCNCDVLWLSWWLKETVPSNTTCCARCHAPAGLKGRYIGELDQSHFTCYA). An Ig-like C2-type domain is found at 366–454 (PVIVEPPTDL…GNTTASATLN (89 aa)). N-linked (GlcNAc...) asparagine glycosylation is found at asparagine 376, asparagine 402, asparagine 424, asparagine 427, and asparagine 446. A disulfide bond links cysteine 387 and cysteine 438. The interval 496–552 (TQPGEEAQQPRGTEKEPPGPTTDGAWGGGRPDAAAPASASTTAPAPRSSRPTEKAFT) is disordered. Residues 528–544 (AAAPASASTTAPAPRSS) show a composition bias toward low complexity. Residues 575–595 (IIIGCFVAITFMAAVMLVAFY) form a helical membrane-spanning segment. A Phosphoserine modification is found at serine 689.

As to quaternary structure, interacts with PTPRF. Interacts with DLG4. N-glycosylated. O-glycosylated; contains sialic acid. Mainly expressed in the brain. Widespread distribution in various brain regions (at protein level). Detected both embryonically and postnatally with stronger expression in postnatal stages.

The protein resides in the membrane. It is found in the presynaptic cell membrane. Synaptic adhesion protein. Regulates the formation of excitatory synapses. The trans-synaptic adhesion between LRRC4B and PTPRF regulates the formation of excitatory synapses in a bidirectional manner. The polypeptide is Leucine-rich repeat-containing protein 4B (Lrrc4b) (Rattus norvegicus (Rat)).